Here is a 411-residue protein sequence, read N- to C-terminus: uncharacterized protein (411 aa).

This is an uncharacterized protein from Magallana gigas (Pacific oyster).